The sequence spans 424 residues: Pachytene checkpoint protein 2 homolog (424 aa).

Position 171–178 (171–178 (GPPGTGKT)) interacts with ATP.

It belongs to the AAA ATPase family. PCH2 subfamily.

Plays a key role in chromosome recombination and chromosome structure development during meiosis. Required at early steps in meiotic recombination that leads to non-crossovers pathways. Also needed for efficient completion of homologous synapsis by influencing crossover distribution along the chromosomes affecting both crossovers and non-crossovers pathways. The protein is Pachytene checkpoint protein 2 homolog (trip13) of Danio rerio (Zebrafish).